Reading from the N-terminus, the 271-residue chain is Probable CAAX prenyl protease 2 (271 aa).

2 consecutive transmembrane segments (helical) span residues 3 to 23 (VYLI…TFPV) and 42 to 62 (CISV…IIGP). Catalysis depends on proton donor/acceptor residues Glu126 and His160. Transmembrane regions (helical) follow at residues 174 to 194 (AYIA…VFGW) and 236 to 256 (IYYT…GITD).

The protein belongs to the peptidase U48 family.

The protein resides in the endoplasmic reticulum membrane. The enzyme catalyses Hydrolyzes the peptide bond -P2-(S-farnesyl or geranylgeranyl)C-P1'-P2'-P3'-COOH where P1' and P2' are amino acids with aliphatic sidechains and P3' is any C-terminal residue.. Protease involved in the processing of a variety of prenylated proteins containing the C-terminal CAAX motif, where C is a cysteine modified with an isoprenoid lipid, A is an aliphatic amino acid and X is any C-terminal amino acid. Proteolytically removes the C-terminal three residues of farnesylated proteins, leaving the prenylated cysteine as the new C-terminus. The chain is Probable CAAX prenyl protease 2 from Schizosaccharomyces pombe (strain 972 / ATCC 24843) (Fission yeast).